Reading from the N-terminus, the 225-residue chain is Urease accessory protein UreF (225 aa).

It belongs to the UreF family. In terms of assembly, ureD, UreF and UreG form a complex that acts as a GTP-hydrolysis-dependent molecular chaperone, activating the urease apoprotein by helping to assemble the nickel containing metallocenter of UreC. The UreE protein probably delivers the nickel.

It is found in the cytoplasm. Required for maturation of urease via the functional incorporation of the urease nickel metallocenter. The sequence is that of Urease accessory protein UreF from Arthrobacter sp. (strain FB24).